The sequence spans 362 residues: Histidinol-phosphate aminotransferase (362 aa).

Lys218 is subject to N6-(pyridoxal phosphate)lysine.

Belongs to the class-II pyridoxal-phosphate-dependent aminotransferase family. Histidinol-phosphate aminotransferase subfamily. In terms of assembly, homodimer. Pyridoxal 5'-phosphate is required as a cofactor.

It carries out the reaction L-histidinol phosphate + 2-oxoglutarate = 3-(imidazol-4-yl)-2-oxopropyl phosphate + L-glutamate. Its pathway is amino-acid biosynthesis; L-histidine biosynthesis; L-histidine from 5-phospho-alpha-D-ribose 1-diphosphate: step 7/9. In Xanthomonas campestris pv. campestris (strain B100), this protein is Histidinol-phosphate aminotransferase.